A 330-amino-acid polypeptide reads, in one-letter code: 1-aminocyclopropane-1-carboxylate oxidase 2 (330 aa).

The region spanning 153-253 (PNFGTKVSNY…RMSIASFYNP (101 aa)) is the Fe2OG dioxygenase domain. Fe cation is bound by residues His-177, Asp-179, and His-234.

This sequence belongs to the iron/ascorbate-dependent oxidoreductase family. Monomer. Requires Fe cation as cofactor.

It carries out the reaction 1-aminocyclopropane-1-carboxylate + L-ascorbate + O2 = ethene + L-dehydroascorbate + hydrogen cyanide + CO2 + 2 H2O. It participates in alkene biosynthesis; ethylene biosynthesis via S-adenosyl-L-methionine; ethylene from S-adenosyl-L-methionine: step 2/2. This is 1-aminocyclopropane-1-carboxylate oxidase 2 (ACO2) from Malus domestica (Apple).